Consider the following 152-residue polypeptide: Transcriptional repressor NrdR (152 aa).

Residues 3-34 (CPKCGSLNDKVVDTRQSKDGTVIRRRRECLDC) fold into a zinc finger. The ATP-cone domain maps to 49–139 (IVVKKKNGTT…VYNEFQDIKD (91 aa)).

It belongs to the NrdR family. Requires Zn(2+) as cofactor.

Functionally, negatively regulates transcription of bacterial ribonucleotide reductase nrd genes and operons by binding to NrdR-boxes. The polypeptide is Transcriptional repressor NrdR (Persephonella marina (strain DSM 14350 / EX-H1)).